A 394-amino-acid polypeptide reads, in one-letter code: Ornithine aminotransferase 1 (394 aa).

Lysine 252 bears the N6-(pyridoxal phosphate)lysine mark.

It belongs to the class-III pyridoxal-phosphate-dependent aminotransferase family. OAT subfamily. Pyridoxal 5'-phosphate is required as a cofactor.

The protein localises to the cytoplasm. It carries out the reaction a 2-oxocarboxylate + L-ornithine = L-glutamate 5-semialdehyde + an L-alpha-amino acid. It participates in amino-acid biosynthesis; L-proline biosynthesis; L-glutamate 5-semialdehyde from L-ornithine: step 1/1. Catalyzes the interconversion of ornithine to glutamate semialdehyde. The sequence is that of Ornithine aminotransferase 1 from Staphylococcus aureus (strain Mu50 / ATCC 700699).